A 163-amino-acid polypeptide reads, in one-letter code: NADH-quinone oxidoreductase subunit I (163 aa).

2 4Fe-4S ferredoxin-type domains span residues 53 to 83 (LRRY…IEAG) and 94 to 123 (TLYE…ETRE). C63, C66, C69, C73, C103, C106, C109, and C113 together coordinate [4Fe-4S] cluster.

The protein belongs to the complex I 23 kDa subunit family. In terms of assembly, NDH-1 is composed of 14 different subunits. Subunits NuoA, H, J, K, L, M, N constitute the membrane sector of the complex. [4Fe-4S] cluster is required as a cofactor.

The protein localises to the cell inner membrane. It carries out the reaction a quinone + NADH + 5 H(+)(in) = a quinol + NAD(+) + 4 H(+)(out). NDH-1 shuttles electrons from NADH, via FMN and iron-sulfur (Fe-S) centers, to quinones in the respiratory chain. The immediate electron acceptor for the enzyme in this species is believed to be ubiquinone. Couples the redox reaction to proton translocation (for every two electrons transferred, four hydrogen ions are translocated across the cytoplasmic membrane), and thus conserves the redox energy in a proton gradient. The sequence is that of NADH-quinone oxidoreductase subunit I from Alkalilimnicola ehrlichii (strain ATCC BAA-1101 / DSM 17681 / MLHE-1).